The chain runs to 267 residues: RWD domain-containing protein 3 (267 aa).

In terms of domain architecture, RWD spans 7–114 (EELSVLAAIF…LWIQQNLRHI (108 aa)). 2 interaction with UBE2I/UBC9 regions span residues 13 to 15 (AAI) and 100 to 102 (VHE).

In terms of assembly, isoform 1 and isoform 2 interact with UBE2I/UBC9. Isoform 1 shows a greater interaction with NFKBIA and HIF1A as compared to isoform 2. Isoform 2 interacts with NCOA2 and NR3C1. As to expression, isoform 1 and isoform 2 are expressed in glioma tumors (at protein level). Expressed in a wide number of tissues with highest expression in cerebellum, pituitary, heart, kidney, liver, stomach, pancreas, prostate and spleen. Low levels in thalamus, spinal cord, esophagus, thymus, lung and peripheral blood leukocytes. A higher level expression seen in pituitary tumors as compared to the pituitary gland.

The protein resides in the nucleus. Its subcellular location is the cytoplasm. In terms of biological role, enhancer of SUMO conjugation. Via its interaction with UBE2I/UBC9, increases SUMO conjugation to proteins by promoting the binding of E1 and E2 enzymes, thioester linkage between SUMO and UBE2I/UBC9 and transfer of SUMO to specific target proteins which include HIF1A, PIAS, NFKBIA, NR3C1 and TOP1. Isoform 1 and isoform 2 positively regulate the NF-kappa-B signaling pathway by enhancing the sumoylation of NF-kappa-B inhibitor alpha (NFKBIA), promoting its stabilization which consequently leads to an increased inhibition of NF-kappa-B transcriptional activity. Isoform 1 and isoform 2 negatively regulate the hypoxia-inducible factor-1 alpha (HIF1A) signaling pathway by increasing the sumoylation of HIF1A, promoting its stabilization, transcriptional activity and the expression of its target gene VEGFA during hypoxia. Isoform 2 promotes the sumoylation and transcriptional activity of the glucocorticoid receptor NR3C1 and enhances the interaction of SUMO1 and NR3C1 with UBE2I/UBC9. Has no effect on ubiquitination. The protein is RWD domain-containing protein 3 (RWDD3) of Homo sapiens (Human).